The chain runs to 177 residues: ATP synthase subunit delta (177 aa).

This sequence belongs to the ATPase delta chain family. In terms of assembly, F-type ATPases have 2 components, F(1) - the catalytic core - and F(0) - the membrane proton channel. F(1) has five subunits: alpha(3), beta(3), gamma(1), delta(1), epsilon(1). F(0) has three main subunits: a(1), b(2) and c(10-14). The alpha and beta chains form an alternating ring which encloses part of the gamma chain. F(1) is attached to F(0) by a central stalk formed by the gamma and epsilon chains, while a peripheral stalk is formed by the delta and b chains.

It is found in the cell inner membrane. Functionally, f(1)F(0) ATP synthase produces ATP from ADP in the presence of a proton or sodium gradient. F-type ATPases consist of two structural domains, F(1) containing the extramembraneous catalytic core and F(0) containing the membrane proton channel, linked together by a central stalk and a peripheral stalk. During catalysis, ATP synthesis in the catalytic domain of F(1) is coupled via a rotary mechanism of the central stalk subunits to proton translocation. This protein is part of the stalk that links CF(0) to CF(1). It either transmits conformational changes from CF(0) to CF(1) or is implicated in proton conduction. The polypeptide is ATP synthase subunit delta (Shigella boydii serotype 18 (strain CDC 3083-94 / BS512)).